The primary structure comprises 239 residues: LexA repressor (239 aa).

A DNA-binding region (H-T-H motif) is located at residues 26–46 (FDEMKDALDLASKSGIHRLIT). Active-site for autocatalytic cleavage activity residues include serine 159 and lysine 197.

The protein belongs to the peptidase S24 family. Homodimer.

The catalysed reaction is Hydrolysis of Ala-|-Gly bond in repressor LexA.. In terms of biological role, represses a number of genes involved in the response to DNA damage (SOS response), including recA and lexA. In the presence of single-stranded DNA, RecA interacts with LexA causing an autocatalytic cleavage which disrupts the DNA-binding part of LexA, leading to derepression of the SOS regulon and eventually DNA repair. This Rhizobium etli (strain ATCC 51251 / DSM 11541 / JCM 21823 / NBRC 15573 / CFN 42) protein is LexA repressor.